The chain runs to 426 residues: Chromatin structure-remodeling complex subunit SFH1 (426 aa).

Ser-78 bears the Phosphoserine mark. The interval 201-242 (AIMIPITLDIEHMGHTIKDQFLWNYNDDSISPEEFASIYCKD) is interaction with STH1.

The protein belongs to the SNF5 family. Interacts directly with STH1. Component of the two forms of the RSC complex composed of at least either RSC1 or RSC2, and ARP7, ARP9, LDB7, NPL6, RSC3, RSC30, RSC4, RSC58, RSC6, RSC8, RSC9, SFH1, STH1, HTL1 and probably RTT102. The complexes interact with histone and histone variant components of centromeric chromatin. Phosphorylated in the G1 phase.

The protein localises to the nucleus. Its function is as follows. Component of the chromatin structure-remodeling complex (RSC), which is involved in transcription regulation and nucleosome positioning. RSC is responsible for the transfer of a histone octamer from a nucleosome core particle to naked DNA. The reaction requires ATP and involves an activated RSC-nucleosome intermediate. Remodeling reaction also involves DNA translocation, DNA twist and conformational change. As a reconfigurer of centromeric and flanking nucleosomes, RSC complex is required both for proper kinetochore function in chromosome segregation and, via a PKC1-dependent signaling pathway, for organization of the cellular cytoskeleton. This subunit is essential for mitotic growth and required for cell cycle progression. This chain is Chromatin structure-remodeling complex subunit SFH1 (SFH1), found in Saccharomyces cerevisiae (strain ATCC 204508 / S288c) (Baker's yeast).